The sequence spans 259 residues: Probable dihydroorotate dehydrogenase B (NAD(+)), electron transfer subunit (259 aa).

In terms of domain architecture, FAD-binding FR-type spans 1-89 (MLPLNATITQ…RGPFGKGFTL (89 aa)). Residues Cys-211, Cys-216, Cys-219, and Cys-229 each contribute to the [2Fe-2S] cluster site.

Belongs to the PyrK family. Heterotetramer of 2 PyrK and 2 PyrD type B subunits. The cofactor is [2Fe-2S] cluster. FAD is required as a cofactor.

It functions in the pathway pyrimidine metabolism; UMP biosynthesis via de novo pathway; orotate from (S)-dihydroorotate (NAD(+) route): step 1/1. Functionally, responsible for channeling the electrons from the oxidation of dihydroorotate from the FMN redox center in the PyrD type B subunit to the ultimate electron acceptor NAD(+). The chain is Probable dihydroorotate dehydrogenase B (NAD(+)), electron transfer subunit from Methanosarcina mazei (strain ATCC BAA-159 / DSM 3647 / Goe1 / Go1 / JCM 11833 / OCM 88) (Methanosarcina frisia).